We begin with the raw amino-acid sequence, 644 residues long: Biosynthetic arginine decarboxylase (644 aa).

Residue Lys100 is modified to N6-(pyridoxal phosphate)lysine. 282-292 (CDVGGGLAIDY) lines the substrate pocket.

It belongs to the Orn/Lys/Arg decarboxylase class-II family. SpeA subfamily. Mg(2+) serves as cofactor. Pyridoxal 5'-phosphate is required as a cofactor.

The enzyme catalyses L-arginine + H(+) = agmatine + CO2. Catalyzes the biosynthesis of agmatine from arginine. The sequence is that of Biosynthetic arginine decarboxylase from Gloeobacter violaceus (strain ATCC 29082 / PCC 7421).